We begin with the raw amino-acid sequence, 449 residues long: Glucose-6-phosphate isomerase (449 aa).

Residue threonine 38 is modified to Phosphothreonine. Glutamate 290 functions as the Proton donor in the catalytic mechanism. Residues histidine 311 and lysine 425 contribute to the active site.

This sequence belongs to the GPI family.

The protein localises to the cytoplasm. The enzyme catalyses alpha-D-glucose 6-phosphate = beta-D-fructose 6-phosphate. It functions in the pathway carbohydrate biosynthesis; gluconeogenesis. Its pathway is carbohydrate degradation; glycolysis; D-glyceraldehyde 3-phosphate and glycerone phosphate from D-glucose: step 2/4. Functionally, catalyzes the reversible isomerization of glucose-6-phosphate to fructose-6-phosphate. In Geobacillus thermodenitrificans (strain NG80-2), this protein is Glucose-6-phosphate isomerase.